We begin with the raw amino-acid sequence, 374 residues long: CMP-N-acetylneuraminate-beta-1,4-galactoside alpha-2,3-sialyltransferase (374 aa).

The Cytoplasmic segment spans residues 1–8 (MGLLVFVR). Residues 9 to 28 (NLLLALCLFLVLGFLYYSAW) form a helical; Signal-anchor for type II membrane protein membrane-spanning segment. The Lumenal segment spans residues 29-374 (KLHLLQWEDS…RVITDLSSGI (346 aa)). 2 N-linked (GlcNAc...) asparagine glycosylation sites follow: N79 and N170. Cysteines 159 and 313 form a disulfide.

The protein belongs to the glycosyltransferase 29 family. Post-translationally, the soluble form derives from the membrane form by proteolytic processing. As to expression, found in all tissues tested. High expression found in brain, liver, kidney, colon, heart and lung.

It localises to the golgi apparatus. Its subcellular location is the golgi stack membrane. The protein localises to the secreted. It carries out the reaction a beta-D-galactosyl-(1-&gt;4)-N-acetyl-beta-D-glucosaminyl derivative + CMP-N-acetyl-beta-neuraminate = an N-acetyl-alpha-neuraminyl-(2-&gt;3)-beta-D-galactosyl-(1-&gt;4)-N-acetyl-beta-D-glucosaminyl derivative + CMP + H(+). Its pathway is protein modification; protein glycosylation. Catalyzes the formation of the NeuAc-alpha-2,3-Gal-beta-1,4-GlcNAc-, NeuAc-alpha-2,3-Gal-beta-1,3-GlcNAc- and NeuAc-alpha-2,3-Gal-beta-1,3-GalNAc- sequences found in terminal carbohydrate groups of glycoproteins and glycolipids. The highest activity is toward Gal-beta-1,3-GlcNAc and the lowest toward Gal-beta-1,3-GalNAc. This is CMP-N-acetylneuraminate-beta-1,4-galactoside alpha-2,3-sialyltransferase (St3gal3) from Rattus norvegicus (Rat).